The following is a 180-amino-acid chain: Large ribosomal subunit protein uL5 (180 aa).

It belongs to the universal ribosomal protein uL5 family. Part of the 50S ribosomal subunit; part of the 5S rRNA/L5/L18/L25 subcomplex. Contacts the 5S rRNA and the P site tRNA. Forms a bridge to the 30S subunit in the 70S ribosome.

Functionally, this is one of the proteins that bind and probably mediate the attachment of the 5S RNA into the large ribosomal subunit, where it forms part of the central protuberance. In the 70S ribosome it contacts protein S13 of the 30S subunit (bridge B1b), connecting the 2 subunits; this bridge is implicated in subunit movement. Contacts the P site tRNA; the 5S rRNA and some of its associated proteins might help stabilize positioning of ribosome-bound tRNAs. The chain is Large ribosomal subunit protein uL5 from Streptococcus mutans serotype c (strain ATCC 700610 / UA159).